The sequence spans 228 residues: L-ribulose-5-phosphate 4-epimerase UlaF (228 aa).

Residues 26-27 (GN), 43-44 (SG), and 72-73 (SS) contribute to the substrate site. Residues aspartate 74, histidine 93, and histidine 95 each contribute to the Zn(2+) site. The active-site Proton donor/acceptor is aspartate 118. Histidine 167 serves as a coordination point for Zn(2+). The active-site Proton donor/acceptor is tyrosine 225.

This sequence belongs to the aldolase class II family. AraD/FucA subfamily. Requires Zn(2+) as cofactor.

It catalyses the reaction L-ribulose 5-phosphate = D-xylulose 5-phosphate. It functions in the pathway cofactor degradation; L-ascorbate degradation; D-xylulose 5-phosphate from L-ascorbate: step 4/4. Functionally, catalyzes the isomerization of L-ribulose 5-phosphate to D-xylulose 5-phosphate. Is involved in the anaerobic L-ascorbate utilization. This is L-ribulose-5-phosphate 4-epimerase UlaF from Escherichia coli O17:K52:H18 (strain UMN026 / ExPEC).